We begin with the raw amino-acid sequence, 405 residues long: N-methyltransferase nanE (405 aa).

S-adenosyl-L-methionine is bound by residues 238–239, D261, and 290–291; these read GG and HH.

This sequence belongs to the class I-like SAM-binding methyltransferase superfamily. Cation-independent O-methyltransferase family.

It functions in the pathway secondary metabolite biosynthesis. Its function is as follows. N-methyltransferase; part of the gene cluster that mediates the biosynthesis of the benzazepine alkaloid nanangelenin A which contains an unprecedented 3,4-dihydro-1-benzazepine-2,5-dione-N-prenyl-N-acetoxy-anthranilamide scaffold. The first step of nanangelenin biosynthesis is catalyzed by the indoleamine 2,3-dioxygenase nanC which produces N-formyl-kynurenine through the catabolism of tryptophan. The two-module NRPS nanA then utilizes anthranilate (Ant) and L-kynurenine (L-Kyn) to assemble the dipeptide product nanangelenin B. The first adenylation domain of nanA (A1) loads anthranilate onto the T1 domain, while A2 loads kynurenine, generated through spontaneous nonenzymatic deformylation of the nanC-supplied N-formyl-kynurenine. The peptide bond formation between the tethered amino acids is catalyzed by the first condensation domain (C1) between anthranilate's carbonyl carbon and kynurenine's aliphatic primary amine. The second C domain (C2) catalyzes the final cyclization event between the aromatic amine of kynurenine and the tethered carbonyl carbon, yielding nanangelenin B. The terminal T3 domain enhances the catalytic efficiency of C2, suggesting the T2-tethered Ant-L-Kyn is transferred to T3 prior to cyclization by C2. Once released from nanA, nanangelenin B is then prenylated by the prenyltransferase nanD to form nanangelenin C. Nanangelenin C is then N-hydroxylated by the FAD-dependent monooxygenase nanF and further acetylated by the acetyltransferase nanB to yield nanangelenin F. Finally, the N-methyltransferase nanE methylates the amide nitrogen of 1-benzazepine to convert nanangelenin F into nanangelenin A. NanE is also able to methylate most of the intermediates of the pathway such as nanangelenin B and nanangelenin C to produce nanangelenin D and nanangelenin E, respectively. In Aspergillus nanangensis, this protein is N-methyltransferase nanE.